A 170-amino-acid chain; its full sequence is Superoxide dismutase [Fe] (170 aa).

Histidine 27, histidine 81, aspartate 163, and histidine 167 together coordinate Fe cation.

The protein belongs to the iron/manganese superoxide dismutase family. Homodimer. The cofactor is Fe cation.

The enzyme catalyses 2 superoxide + 2 H(+) = H2O2 + O2. Its function is as follows. Destroys superoxide anion radicals which are normally produced within the cells and which are toxic to biological systems. This is Superoxide dismutase [Fe] (sodA) from Raoultella planticola (Klebsiella planticola).